The following is a 180-amino-acid chain: Translation machinery-associated protein 16 homolog (180 aa).

Basic and acidic residues predominate over residues Met1–Lys12. The segment at Met1 to Lys32 is disordered. A compositionally biased stretch (basic residues) spans His13–Lys32.

The protein belongs to the TMA16 family.

This chain is Translation machinery-associated protein 16 homolog, found in Drosophila melanogaster (Fruit fly).